A 257-amino-acid polypeptide reads, in one-letter code: Ribonuclease PH (257 aa).

Residues arginine 87 and 125–127 (GTR) contribute to the phosphate site.

The protein belongs to the RNase PH family. In terms of assembly, homohexameric ring arranged as a trimer of dimers.

The catalysed reaction is tRNA(n+1) + phosphate = tRNA(n) + a ribonucleoside 5'-diphosphate. Phosphorolytic 3'-5' exoribonuclease that plays an important role in tRNA 3'-end maturation. Removes nucleotide residues following the 3'-CCA terminus of tRNAs; can also add nucleotides to the ends of RNA molecules by using nucleoside diphosphates as substrates, but this may not be physiologically important. Probably plays a role in initiation of 16S rRNA degradation (leading to ribosome degradation) during starvation. The protein is Ribonuclease PH of Geobacillus kaustophilus (strain HTA426).